Here is an 844-residue protein sequence, read N- to C-terminus: DNA mismatch repair protein MutS (844 aa).

610–617 provides a ligand contact to ATP; the sequence is GPNMGGKS.

The protein belongs to the DNA mismatch repair MutS family.

Functionally, this protein is involved in the repair of mismatches in DNA. It is possible that it carries out the mismatch recognition step. This protein has a weak ATPase activity. This chain is DNA mismatch repair protein MutS, found in Francisella tularensis subsp. novicida (strain U112).